Here is a 334-residue protein sequence, read N- to C-terminus: Protein-methionine-sulfoxide reductase catalytic subunit MsrP (334 aa).

The tat-type signal signal peptide spans 1-44 (MKKNQFLKESDVTAESVFFMKRRQVLKALGISATALSLPHAAHA). Residues Asn88, 91–92 (YE), Cys146, Thr181, Asn233, Arg238, and 249–251 (GIK) contribute to the Mo-molybdopterin site.

Belongs to the MsrP family. As to quaternary structure, heterodimer of a catalytic subunit (MsrP) and a heme-binding subunit (MsrQ). The cofactor is Mo-molybdopterin. In terms of processing, exported by the Tat system. Can also be exported by the Sec system.

It localises to the periplasm. The enzyme catalyses L-methionyl-[protein] + a quinone + H2O = L-methionyl-(S)-S-oxide-[protein] + a quinol. It carries out the reaction L-methionyl-[protein] + a quinone + H2O = L-methionyl-(R)-S-oxide-[protein] + a quinol. Functionally, part of the MsrPQ system that repairs oxidized periplasmic proteins containing methionine sulfoxide residues (Met-O), using respiratory chain electrons. Thus protects these proteins from oxidative-stress damage caused by reactive species of oxygen and chlorine. MsrPQ is essential for the maintenance of envelope integrity under bleach stress, rescuing a wide series of structurally unrelated periplasmic proteins from methionine oxidation, including the primary periplasmic chaperone SurA and the lipoprotein Pal. The catalytic subunit MsrP is non-stereospecific, being able to reduce both (R-) and (S-) diastereoisomers of methionine sulfoxide. Can catalyze the reduction of a variety of substrates in vitro, including dimethyl sulfoxide, trimethylamine N-oxide, phenylmethyl sulfoxide and L-methionine sulfoxide. Cannot reduce cyclic N-oxides. Shows no activity as sulfite oxidase. The protein is Protein-methionine-sulfoxide reductase catalytic subunit MsrP of Escherichia coli (strain K12).